Consider the following 454-residue polypeptide: Cell division cycle-associated 7-like protein (454 aa).

The Integrase domain-binding motif 1 (IBM1) motif lies at 9 to 33 (IPKEVADIFNAPSDDEEFVGFRDDV). Serine 21 carries the phosphoserine modification. An Integrase domain-binding motif 2 (IBM2) motif is present at residues 65 to 91 (FTEELRRIFIEDTDSETEDFAGFTQSD). Threonine 77 carries the phosphothreonine modification. Serine 79 is subject to Phosphoserine. Phosphothreonine is present on residues threonine 81 and threonine 88. Disordered regions lie at residues 103-169 (VESD…LFSS) and 188-213 (QVIQ…SSDA). Phosphoserine is present on residues serine 105, serine 108, serine 117, serine 138, serine 139, serine 162, serine 195, and serine 197. Over residues 117 to 126 (SEEEEDEEED) the composition is skewed to acidic residues. The interval 213–235 (ALLKRTMNIKENKAMLAQLLAEL) is MYC-binding. Residues lysine 222 and lysine 225 each participate in a glycyl lysine isopeptide (Lys-Gly) (interchain with G-Cter in SUMO2) cross-link. Position 261 is a phosphoserine (serine 261).

In terms of assembly, interacts with MYC. Interacts (via IBM motifs) with PSIP1 (via IBD domain); phosphorylation increases its affinity for PSIP1. Post-translationally, phosphorylation increases its interaction with PSIP1. In terms of tissue distribution, ubiquitous. Overexpressed in medulloblastoma.

The protein localises to the cytoplasm. It localises to the nucleus. Plays a role in transcriptional regulation as a repressor that inhibits monoamine oxidase A (MAOA) activity and gene expression by binding to the promoter. Plays an important oncogenic role in mediating the full transforming effect of MYC in medulloblastoma cells. Involved in apoptotic signaling pathways; May act downstream of P38-kinase and BCL-2, but upstream of CASP3/caspase-3 as well as CCND1/cyclin D1 and E2F1. This chain is Cell division cycle-associated 7-like protein (CDCA7L), found in Homo sapiens (Human).